A 369-amino-acid polypeptide reads, in one-letter code: Nuclear pore complex-interacting protein family member A6 (369 aa).

The interval 151 to 170 is disordered; the sequence is SMKEREHGEKERQVSEAEEN.

This sequence belongs to the NPIP family.

This Homo sapiens (Human) protein is Nuclear pore complex-interacting protein family member A6.